The chain runs to 390 residues: Probable protein phosphatase 2C 30 (390 aa).

Polar residues predominate over residues 1 to 10; the sequence is MQLSKNPIKQ. 2 disordered regions span residues 1–20 and 40–85; these read MQLSKNPIKQTRNREKNYTD and PPLV…DSET. Residues 44–61 are compositionally biased toward low complexity; sequence FSPTSVKTPLSSPRSSPP. The 258-residue stretch at 128 to 385 folds into the PPM-type phosphatase domain; it reads YYSVYCKRGR…DDISLIIIQL (258 aa). Residues D166, G167, D331, and D376 each coordinate Mn(2+).

The protein belongs to the PP2C family. Mg(2+) serves as cofactor. The cofactor is Mn(2+).

The enzyme catalyses O-phospho-L-seryl-[protein] + H2O = L-seryl-[protein] + phosphate. It carries out the reaction O-phospho-L-threonyl-[protein] + H2O = L-threonyl-[protein] + phosphate. The protein is Probable protein phosphatase 2C 30 (PP2C5) of Arabidopsis thaliana (Mouse-ear cress).